The primary structure comprises 430 residues: Nucleoporin NUP42 (430 aa).

Positions 1-68 (MSAFGNPFTS…AFGMPQFGTN (68 aa)) are disordered. An SXFG 1 repeat occupies 2–5 (SAFG). Residues 15–36 (NLSNTSGINPFTNNAASTNNMG) show a composition bias toward polar residues. SAFGXPXFG repeat units follow at residues 38-46 (SAFGRPSFG) and 58-66 (SAFGMPQFG). The span at 45–68 (FGTANTMTGGTTTSAFGMPQFGTN) shows a compositional bias: low complexity. An SXFG 2 repeat occupies 78–81 (SAFG). 2 SAFGXPXFG repeats span residues 90–98 (SAFGAPAFG) and 112–120 (SAFGAPSFG). The segment at 121–230 (STGFGAMAAT…QNTSTSSGTG (110 aa)) is interactions with CRM1 and GFD1. FG repeat units lie at residues 124-125 (FG) and 134-135 (FG). At Ser-137 the chain carries Phosphoserine. The stretch at 143 to 151 (SAFGQPAFG) is one SAFGXPXFG 5 repeat. SXFG repeat units follow at residues 168 to 171 (SAFG) and 182 to 185 (SPFG). The tract at residues 180-294 (TTSPFGSLQQ…QSPFSGGSGG (115 aa)) is disordered. Residues 186-201 (SLQQNASQNASSTSSA) are compositionally biased toward low complexity. Residues 200-208 (SAFGKPTFG) form an SAFGXPXFG 6 repeat. Residues 209-230 (AATNTQSPFGTIQNTSTSSGTG) are compositionally biased toward polar residues. SXFG repeat units follow at residues 215–218 (SPFG) and 232–235 (SPFG). 2 stretches are compositionally biased toward polar residues: residues 237 to 252 (FGTN…NLQS) and 260 to 285 (PFGT…TNNQ). SXFG repeat units lie at residues 259 to 262 (SPFG) and 277 to 280 (SAFG). One copy of the FG 3 repeat lies at 296–297 (FG). A Phosphoserine modification is found at Ser-298. The stretch at 312–315 (SSFG) is one SXFG 9 repeat. FG repeat units lie at residues 319-322 (FSFG), 339-340 (FG), and 361-364 (FGFG). Residues 319–346 (FSFGITPQNDANKVSQSNPSFGQTMPNT) are disordered. Residues 323–346 (ITPQNDANKVSQSNPSFGQTMPNT) are compositionally biased toward polar residues. Residues 365–430 (QQQMNATNVN…DIPPPPALVA (66 aa)) form an interaction with GLE1 region.

Component of the nuclear pore complex (NPC). NPC constitutes the exclusive means of nucleocytoplasmic transport. NPCs allow the passive diffusion of ions and small molecules and the active, nuclear transport receptor-mediated bidirectional transport of macromolecules such as proteins, RNAs, ribonucleoparticles (RNPs), and ribosomal subunits across the nuclear envelope. Due to its 8-fold rotational symmetry, all subunits are present with 8 copies or multiples thereof. NUP42 interacts with the NUP82 subcomplex. It interacts directly with GLE1, and through its FG repeats with GFD1, the heterodimeric mRNA transport factor MEX67/MTR2, and the karyopherin CRM1.

The protein localises to the nucleus. The protein resides in the nuclear pore complex. It is found in the nucleus membrane. Its function is as follows. Functions as a component of the nuclear pore complex (NPC). NPC components, collectively referred to as nucleoporins (NUPs), can play the role of both NPC structural components and of docking or interaction partners for transiently associated nuclear transport factors. Active directional transport is assured by both, a Phe-Gly (FG) repeat affinity gradient for these transport factors across the NPC and a transport cofactor concentration gradient across the nuclear envelope (GSP1 and GSP2 GTPases associated predominantly with GTP in the nucleus, with GDP in the cytoplasm). NUP42 is specifically important for nuclear protein and mRNA export. The protein is Nucleoporin NUP42 (NUP42) of Saccharomyces cerevisiae (strain ATCC 204508 / S288c) (Baker's yeast).